A 196-amino-acid chain; its full sequence is Imidazoleglycerol-phosphate dehydratase (196 aa).

The protein belongs to the imidazoleglycerol-phosphate dehydratase family.

It localises to the cytoplasm. It catalyses the reaction D-erythro-1-(imidazol-4-yl)glycerol 3-phosphate = 3-(imidazol-4-yl)-2-oxopropyl phosphate + H2O. It functions in the pathway amino-acid biosynthesis; L-histidine biosynthesis; L-histidine from 5-phospho-alpha-D-ribose 1-diphosphate: step 6/9. In Clostridium botulinum (strain ATCC 19397 / Type A), this protein is Imidazoleglycerol-phosphate dehydratase.